The sequence spans 283 residues: Phosphatidylglycerol--prolipoprotein diacylglyceryl transferase (283 aa).

7 consecutive transmembrane segments (helical) span residues 18-38 (LGGIEVHWYGLAYACAIVVAF), 62-82 (YFLWAELGIVLGARIGYVLIY), 106-126 (FIGIRGMSYHGGLVGFLIASY), 136-156 (LLIYLDLIAISLPLGYVFGRI), 190-210 (PSQLIEAFLEGVVVFLMVMWA), 218-238 (GLLIVVYGLGYSLMRFIAEFY), and 252-272 (LSMGQILSVFMVIVSLGILLY). An a 1,2-diacyl-sn-glycero-3-phospho-(1'-sn-glycerol)-binding site is contributed by R155.

It belongs to the Lgt family.

Its subcellular location is the cell inner membrane. The catalysed reaction is L-cysteinyl-[prolipoprotein] + a 1,2-diacyl-sn-glycero-3-phospho-(1'-sn-glycerol) = an S-1,2-diacyl-sn-glyceryl-L-cysteinyl-[prolipoprotein] + sn-glycerol 1-phosphate + H(+). The protein operates within protein modification; lipoprotein biosynthesis (diacylglyceryl transfer). Functionally, catalyzes the transfer of the diacylglyceryl group from phosphatidylglycerol to the sulfhydryl group of the N-terminal cysteine of a prolipoprotein, the first step in the formation of mature lipoproteins. The chain is Phosphatidylglycerol--prolipoprotein diacylglyceryl transferase from Helicobacter pylori (strain J99 / ATCC 700824) (Campylobacter pylori J99).